A 135-amino-acid chain; its full sequence is Flagellar assembly factor FliW 2 (135 aa).

Belongs to the FliW family. As to quaternary structure, interacts with translational regulator CsrA and flagellin(s).

It localises to the cytoplasm. Functionally, acts as an anti-CsrA protein, binds CsrA and prevents it from repressing translation of its target genes, one of which is flagellin. Binds to flagellin and participates in the assembly of the flagellum. The chain is Flagellar assembly factor FliW 2 from Helicobacter acinonychis (strain Sheeba).